A 570-amino-acid chain; its full sequence is MSFGVPHSGGSRRSKWDQAGPDADAGSAPTGALDAAAAVAAKINAMLVAKGKLKPSQISSAAPVDKAAGAGGNKLKDDLVVAEVEINDVPLTCRNLLTRGQTQDEISRVSGAAVSTRGRFMTVEEKSKALPSDRPLYLHVQGQTRDLVDKAVNRIKEIITNGVVKAATNSTYSGATVTVYQQSGPSVPTIPSAPHKPHYPGGMHYVQDKVFVGLDQALQGFNVKERVEGPSCSFLQHIQAETGAKVFLRGKGSGCLEPASGREAFEPMYIYISHPKPEGLASAKTLCENLLQTVHAEYSRYLNQMSSMMPTQGFIHPPVVNGLPPQPPYYSPAGFQPSYPAPVPPPPPPIAPQYPVAPVAPAPVPPPNAQYPITPVPAHVPTQTLLPAAFPPTAPVPPKLTAPPNPPQKRRFTEEVDEMDRGLLGYQHGPIHMTNLGAGMPVGSSETSGPPSAASSVPVRERDSSRQLMPPPCAPALLKPLRPLKADESPSAPSLLEPQVKRMRTGLVAYAGDSSDEEEDHGPSRAAVTAAGNPGAGWNPYRCPPSPPHRPKTQTAPQPTQQNMPFWMAP.

Residues 1–29 (MSFGVPHSGGSRRSKWDQAGPDADAGSAP) form a disordered region. KH domains are found at residues 77–157 (DDLV…RIKE) and 210–292 (VFVG…NLLQ). A compositionally biased stretch (pro residues) spans 391–407 (PPTAPVPPKLTAPPNPP). Disordered stretches follow at residues 391–410 (PPTA…PQKR), 438–500 (AGMP…EPQV), and 512–570 (GDSS…WMAP). Positions 427–497 (QHGPIHMTNL…ESPSAPSLLE (71 aa)) are required for nuclear retention. Over residues 553–562 (TQTAPQPTQQ) the composition is skewed to low complexity.

The protein belongs to the KHDC4 family. Interacts with PRPF19.

It localises to the nucleus. It is found in the cytoplasm. Its function is as follows. RNA-binding protein involved in pre-mRNA splicing. Interacts with the PRP19C/Prp19 complex/NTC/Nineteen complex which is part of the spliceosome. Involved in regulating splice site selection. Binds preferentially RNA with A/C rich sequences and poly-C stretches. The sequence is that of KH homology domain-containing protein 4 (khdc4) from Danio rerio (Zebrafish).